The following is a 352-amino-acid chain: Phosphoribosylformylglycinamidine cyclo-ligase (352 aa).

The protein belongs to the AIR synthase family.

Its subcellular location is the cytoplasm. It carries out the reaction 2-formamido-N(1)-(5-O-phospho-beta-D-ribosyl)acetamidine + ATP = 5-amino-1-(5-phospho-beta-D-ribosyl)imidazole + ADP + phosphate + H(+). The protein operates within purine metabolism; IMP biosynthesis via de novo pathway; 5-amino-1-(5-phospho-D-ribosyl)imidazole from N(2)-formyl-N(1)-(5-phospho-D-ribosyl)glycinamide: step 2/2. This is Phosphoribosylformylglycinamidine cyclo-ligase from Hahella chejuensis (strain KCTC 2396).